The sequence spans 725 residues: D-(-)-3-hydroxybutyrate oligomer hydrolase (725 aa).

Residues 1-22 (MNTTRDANRLRQRASLSGLALA) form the signal peptide. S322 serves as the catalytic Charge relay system.

It belongs to the D-(-)-3-hydroxybutyrate oligomer hydrolase family.

It is found in the secreted. The catalysed reaction is (3R)-hydroxybutanoate dimer + H2O = 2 (R)-3-hydroxybutanoate + H(+). It participates in lipid metabolism; butanoate metabolism. Its function is as follows. Participates in the degradation of poly-3-hydroxybutyrate (PHB). It works downstream of poly(3-hydroxybutyrate) depolymerase, hydrolyzing D(-)-3-hydroxybutyrate oligomers of various length (3HB-oligomers) into 3HB-monomers. The chain is D-(-)-3-hydroxybutyrate oligomer hydrolase from Ralstonia nicotianae (strain ATCC BAA-1114 / GMI1000) (Ralstonia solanacearum).